Consider the following 466-residue polypeptide: Myocardial zonula adherens protein (466 aa).

A compositionally biased stretch (polar residues) spans 1–10 (MLRSTSTVTL). An N-terminal signal peptide occupies residues 1-16 (MLRSTSTVTLFSGGGA). The interval 1–68 (MLRSTSTVTL…SNGESTKRLP (68 aa)) is disordered. Residues 45 to 55 (TEKKIERKDQP) are compositionally biased toward basic and acidic residues. Coiled coils occupy residues 95–137 (NQLK…QDLS) and 187–415 (HIKD…LTET).

This sequence belongs to the MYZAP family. In terms of assembly, interacts with DSP, MPRIP and TJP1/ZO1. Interaction with MPRIP inhibits the activation of transcription factor SRF. Interacts with GRIN1. Interacts with DYNLL1. As to expression, detected in heart myocardium and lung.

Its subcellular location is the cytoplasm. It is found in the cytoskeleton. The protein localises to the cell membrane. The protein resides in the myofibril. It localises to the sarcomere. Its subcellular location is the i band. It is found in the z line. The protein localises to the cell junction. Plays a role in cellular signaling via Rho-related GTP-binding proteins and activation of transcription factor SRF. Targets TJP1 to cell junctions. In cortical neurons, may play a role in glutaminergic signal transduction through interaction with the NMDA receptor subunit GRIN1. The protein is Myocardial zonula adherens protein (Myzap) of Mus musculus (Mouse).